The primary structure comprises 255 residues: Imidazole glycerol phosphate synthase subunit HisF (255 aa).

Catalysis depends on residues aspartate 11 and aspartate 130.

It belongs to the HisA/HisF family. As to quaternary structure, heterodimer of HisH and HisF.

It is found in the cytoplasm. The enzyme catalyses 5-[(5-phospho-1-deoxy-D-ribulos-1-ylimino)methylamino]-1-(5-phospho-beta-D-ribosyl)imidazole-4-carboxamide + L-glutamine = D-erythro-1-(imidazol-4-yl)glycerol 3-phosphate + 5-amino-1-(5-phospho-beta-D-ribosyl)imidazole-4-carboxamide + L-glutamate + H(+). It participates in amino-acid biosynthesis; L-histidine biosynthesis; L-histidine from 5-phospho-alpha-D-ribose 1-diphosphate: step 5/9. In terms of biological role, IGPS catalyzes the conversion of PRFAR and glutamine to IGP, AICAR and glutamate. The HisF subunit catalyzes the cyclization activity that produces IGP and AICAR from PRFAR using the ammonia provided by the HisH subunit. This is Imidazole glycerol phosphate synthase subunit HisF from Rhodopseudomonas palustris (strain BisA53).